The chain runs to 352 residues: Maleylacetate reductase (352 aa).

This sequence belongs to the iron-containing alcohol dehydrogenase family.

The catalysed reaction is 3-oxoadipate + NAD(+) = maleylacetate + NADH + H(+). It catalyses the reaction 3-oxoadipate + NADP(+) = maleylacetate + NADPH + H(+). The protein operates within aromatic compound metabolism; 3-chlorocatechol degradation. This Pseudomonas sp. (strain P51) protein is Maleylacetate reductase (tcbF).